Consider the following 131-residue polypeptide: Small ribosomal subunit protein uS11 (131 aa).

Belongs to the universal ribosomal protein uS11 family. As to quaternary structure, part of the 30S ribosomal subunit. Interacts with proteins S7 and S18. Binds to IF-3.

Functionally, located on the platform of the 30S subunit, it bridges several disparate RNA helices of the 16S rRNA. Forms part of the Shine-Dalgarno cleft in the 70S ribosome. The protein is Small ribosomal subunit protein uS11 of Cellvibrio japonicus (strain Ueda107) (Pseudomonas fluorescens subsp. cellulosa).